We begin with the raw amino-acid sequence, 130 residues long: DNA-directed RNA polymerase subunit omega (130 aa).

The disordered stretch occupies residues 110–130 (EELLKGLEGLAPPEEQPEEEE).

The protein belongs to the RNA polymerase subunit omega family. The RNAP catalytic core consists of 2 alpha, 1 beta, 1 beta' and 1 omega subunit. When a sigma factor is associated with the core the holoenzyme is formed, which can initiate transcription.

It carries out the reaction RNA(n) + a ribonucleoside 5'-triphosphate = RNA(n+1) + diphosphate. Promotes RNA polymerase assembly. Latches the N- and C-terminal regions of the beta' subunit thereby facilitating its interaction with the beta and alpha subunits. In Afipia carboxidovorans (strain ATCC 49405 / DSM 1227 / KCTC 32145 / OM5) (Oligotropha carboxidovorans), this protein is DNA-directed RNA polymerase subunit omega.